Reading from the N-terminus, the 355-residue chain is MSGQPKRLMVMAGGTGGHVFPGLAVAHHLMAQGWQVRWLGTADRMEADLVPKHGIDIDFIRISGLRGKGVKALLAAPLRIFNAWRQARAIMKRFKPDVVLGMGGYVSGPGGLAAWSLGIPVVLHEQNGIAGLTNQWLAKIATTVMQAFPGAFPNAEVVGNPVRTDVLALPLPQVRLAGRDGPIRVLVVGGSQGARVLNQTMPQVAARLGDTVTIWHQSGKGVQHTVEQAYAGVGQPQHKVTEFIDDMAAAYAWADVVVCRSGALTVSEIAAAGLPAIFVPFQHKDRQQYWNALPLENAGAAKIFEQPQFTVEAVADTLAGWSRGALLTMAERARAVSIPDATERVASEVSRVART.

UDP-N-acetyl-alpha-D-glucosamine contacts are provided by residues 15 to 17 (TGG), Asn-127, Arg-163, Ser-191, Ile-244, 263 to 268 (ALTVSE), and Gln-288.

This sequence belongs to the glycosyltransferase 28 family. MurG subfamily.

Its subcellular location is the cell inner membrane. The enzyme catalyses di-trans,octa-cis-undecaprenyl diphospho-N-acetyl-alpha-D-muramoyl-L-alanyl-D-glutamyl-meso-2,6-diaminopimeloyl-D-alanyl-D-alanine + UDP-N-acetyl-alpha-D-glucosamine = di-trans,octa-cis-undecaprenyl diphospho-[N-acetyl-alpha-D-glucosaminyl-(1-&gt;4)]-N-acetyl-alpha-D-muramoyl-L-alanyl-D-glutamyl-meso-2,6-diaminopimeloyl-D-alanyl-D-alanine + UDP + H(+). Its pathway is cell wall biogenesis; peptidoglycan biosynthesis. Functionally, cell wall formation. Catalyzes the transfer of a GlcNAc subunit on undecaprenyl-pyrophosphoryl-MurNAc-pentapeptide (lipid intermediate I) to form undecaprenyl-pyrophosphoryl-MurNAc-(pentapeptide)GlcNAc (lipid intermediate II). The polypeptide is UDP-N-acetylglucosamine--N-acetylmuramyl-(pentapeptide) pyrophosphoryl-undecaprenol N-acetylglucosamine transferase (Salmonella dublin (strain CT_02021853)).